The following is a 162-amino-acid chain: UPF0303 protein RL3365 (162 aa).

The protein belongs to the UPF0303 family.

The protein is UPF0303 protein RL3365 of Rhizobium johnstonii (strain DSM 114642 / LMG 32736 / 3841) (Rhizobium leguminosarum bv. viciae).